The chain runs to 324 residues: Olfactory receptor 2T2 (324 aa).

The Extracellular portion of the chain corresponds to methionine 1–glycine 26. Asparagine 9 carries N-linked (GlcNAc...) asparagine glycosylation. The helical transmembrane segment at leucine 27 to isoleucine 50 threads the bilayer. Over histidine 51–threonine 58 the chain is Cytoplasmic. The helical transmembrane segment at proline 59 to proline 80 threads the bilayer. The Extracellular segment spans residues lysine 81–glutamine 101. Cysteine 98 and cysteine 190 are disulfide-bonded. The helical transmembrane segment at isoleucine 102 to tyrosine 121 threads the bilayer. At aspartate 122–arginine 140 the chain is on the cytoplasmic side. Residues valine 141–methionine 159 form a helical membrane-spanning segment. At leucine 160–tyrosine 196 the chain is on the extracellular side. Residues glutamate 197 to threonine 220 form a helical membrane-spanning segment. Topologically, residues histidine 221–lysine 237 are cytoplasmic. A helical membrane pass occupies residues alanine 238–asparagine 260. Over valine 261 to lysine 273 the chain is Extracellular. The chain crosses the membrane as a helical span at residues valine 274 to leucine 293. Topologically, residues arginine 294–glycine 324 are cytoplasmic.

This sequence belongs to the G-protein coupled receptor 1 family.

The protein resides in the cell membrane. Its function is as follows. Odorant receptor. This chain is Olfactory receptor 2T2 (OR2T2), found in Homo sapiens (Human).